Consider the following 342-residue polypeptide: Pre-mRNA-splicing factor 18 (342 aa).

An N-acetylmethionine modification is found at Met-1.

Belongs to the PRP18 family. Heterodimer with PPIH. Interacts with PRPF4 and with the spliceosome. Part of a complex containing U4/U6 snRNPs. Also detected in the cytoplasm. Detected in brain, heart, liver and skeletal muscle.

The protein resides in the nucleus speckle. In terms of biological role, participates in the second step of pre-mRNA splicing. Down-regulates the expression of potassium channel subunits. This Rattus norvegicus (Rat) protein is Pre-mRNA-splicing factor 18 (Prpf18).